Reading from the N-terminus, the 577-residue chain is Secreted LysM effector Lys4 (577 aa).

The first 19 residues, 1–19 (MRALTAAVLFVAGLTPVLA), serve as a signal peptide directing secretion. In terms of domain architecture, LysM 1 spans 38–85 (AWYTIVKGDGCDTVEKKFKITPEQFFKWNPDVSTDCVKNFWVGNSYCV). A compositionally biased stretch (low complexity) spans 96–121 (TSTTVKSSSTTQKTSSTSSKLSSSSK). The disordered stretch occupies residues 96–135 (TSTTVKSSSTTQKTSSTSSKLSSSSKPVNTTTTPYSTRNP). The segment covering 122–135 (PVNTTTTPYSTRNP) has biased composition (polar residues). 4 N-linked (GlcNAc...) asparagine glycosylation sites follow: N124, N140, N216, and N235. 3 consecutive LysM domains span residues 251–298 (NFYQ…YYCV), 328–375 (KWYQ…WYCV), and 408–455 (QYWL…YVCV). Positions 464-485 (SGSTTTITGPPTKGSNPPTTTT) are enriched in low complexity. Residues 464-490 (SGSTTTITGPPTKGSNPPTTTTSGGGG) form a disordered region. The region spanning 510–558 (FWFRGKDGASLFCADIAKDAGVSLPDFLKWNPGVGSNCESLWADTWYCV) is the LysM 5 domain.

The protein belongs to the secreted LysM effector family.

Functionally, might have a role in sequestration of chitin oligosaccharides (breakdown products of fungal cell walls that are released during invasion and act as triggers of host immunity) to dampen host defense. In Pochonia chlamydosporia (strain 123) (Metacordyceps chlamydosporia), this protein is Secreted LysM effector Lys4.